The primary structure comprises 1138 residues: Phosphatidylserine decarboxylase proenzyme 2 (1138 aa).

The region spanning 1–122 is the C2 1 domain; the sequence is MRIIKGRKRG…SNSGLSSHSH (122 aa). Disordered regions lie at residues 90–166, 269–305, and 413–448; these read TGAP…PGST, MRSS…DTDL, and AVSE…REDS. Residues 98 to 121 show a composition bias toward low complexity; the sequence is SRPRTTTANTSSSTLSNSGLSSHS. A compositionally biased stretch (polar residues) spans 125 to 135; sequence RNLNVTSKGNQ. Residues 136-166 are compositionally biased toward low complexity; that stretch reads TSTSINSVSSSATPAPSHSSSSLSTTGPGST. The segment covering 293-305 has biased composition (basic and acidic residues); sequence EIRREKPYSDTDL. Residues 421–448 are compositionally biased toward acidic residues; it reads SVDDEESENQQESDEEFDIYNEDEREDS. The C2 2 domain occupies 478-600; it reads RRAKSNFFIS…QQQQHENEWI (123 aa). 3 residues coordinate Ca(2+): D571, S574, and D577. Residues D899, H956, and S1043 each act as charge relay system; for autoendoproteolytic cleavage activity in the active site. Residue S1043 is the Schiff-base intermediate with substrate; via pyruvic acid; for decarboxylase activity of the active site. The residue at position 1043 (S1043) is a Pyruvic acid (Ser); by autocatalysis.

The protein belongs to the phosphatidylserine decarboxylase family. PSD-B subfamily. Eukaryotic type II sub-subfamily. As to quaternary structure, heterodimer of a large membrane-associated beta subunit and a small pyruvoyl-containing alpha subunit. Interacts with pstB2/PDR17. This interaction may be a means to structurally tether the donor membrane (ER) harboring PstB2/PDR17 to acceptor membranes (Golgi/endosomes) harboring PSD2 during PtdSer transport to the site of PtdEtn synthesis. The cofactor is pyruvate. Requires Ca(2+) as cofactor. Post-translationally, is synthesized initially as an inactive proenzyme. Formation of the active enzyme involves a self-maturation process in which the active site pyruvoyl group is generated from an internal serine residue via an autocatalytic post-translational modification. Two non-identical subunits are generated from the proenzyme in this reaction, and the pyruvate is formed at the N-terminus of the alpha chain, which is derived from the carboxyl end of the proenzyme. The autoendoproteolytic cleavage occurs by a canonical serine protease mechanism, in which the side chain hydroxyl group of the serine supplies its oxygen atom to form the C-terminus of the beta chain, while the remainder of the serine residue undergoes an oxidative deamination to produce ammonia and the pyruvoyl prosthetic group on the alpha chain. During this reaction, the Ser that is part of the protease active site of the proenzyme becomes the pyruvoyl prosthetic group, which constitutes an essential element of the active site of the mature decarboxylase.

Its subcellular location is the golgi apparatus membrane. The protein resides in the endosome membrane. The enzyme catalyses a 1,2-diacyl-sn-glycero-3-phospho-L-serine + H(+) = a 1,2-diacyl-sn-glycero-3-phosphoethanolamine + CO2. Its pathway is phospholipid metabolism; phosphatidylethanolamine biosynthesis; phosphatidylethanolamine from CDP-diacylglycerol: step 2/2. Functionally, catalyzes the formation of phosphatidylethanolamine (PtdEtn) from phosphatidylserine (PtdSer). Plays a central role in phospholipid metabolism and in the interorganelle trafficking of phosphatidylserine. Phosphatidylethanolamine produced by PSD2 is insufficient to completely provide the PtdEtn pool required by mitochondria under respiratory conditions. PSD2 is also involved in the PtdSer transport step to the site of PtdEtn synthesis on the Golgi/endosome membranes. Required for normal heavy metal resistance. The polypeptide is Phosphatidylserine decarboxylase proenzyme 2 (Saccharomyces cerevisiae (strain ATCC 204508 / S288c) (Baker's yeast)).